A 262-amino-acid chain; its full sequence is Acyl-[acyl-carrier-protein]--UDP-N-acetylglucosamine O-acyltransferase (262 aa).

Belongs to the transferase hexapeptide repeat family. LpxA subfamily. Homotrimer.

It localises to the cytoplasm. It catalyses the reaction a (3R)-hydroxyacyl-[ACP] + UDP-N-acetyl-alpha-D-glucosamine = a UDP-3-O-[(3R)-3-hydroxyacyl]-N-acetyl-alpha-D-glucosamine + holo-[ACP]. The protein operates within glycolipid biosynthesis; lipid IV(A) biosynthesis; lipid IV(A) from (3R)-3-hydroxytetradecanoyl-[acyl-carrier-protein] and UDP-N-acetyl-alpha-D-glucosamine: step 1/6. Involved in the biosynthesis of lipid A, a phosphorylated glycolipid that anchors the lipopolysaccharide to the outer membrane of the cell. This chain is Acyl-[acyl-carrier-protein]--UDP-N-acetylglucosamine O-acyltransferase, found in Burkholderia thailandensis (strain ATCC 700388 / DSM 13276 / CCUG 48851 / CIP 106301 / E264).